Reading from the N-terminus, the 2947-residue chain is 3'-5' exoribonuclease HELZ2 (2947 aa).

Residues 85–114 (PMRYQVCHYYRPGLGCRRHWNRCTFARSPE) form a C3H1-type 1 zinc finger. The C2H2-type zinc-finger motif lies at 167-187 (CFTCCPPCLCPVDPRGHCPKH). The C3H1-type 2 zinc-finger motif lies at 221-245 (YCMYVGRGVPCRHGASRCEYAHSAV). A C2H2-type; atypical zinc finger spans residues 289-311 (CHACLVTCNSQEAFENHCSSLEH). The 549-residue stretch at 769 to 1317 (VGLIAGRRPE…ELLDESQQVT (549 aa)) folds into the UvrD-like helicase ATP-binding domain. 790 to 797 (GPFGTGKT) is a binding site for ATP. The interaction with THRAP3 stretch occupies residues 809–1290 (QQPHTKVLIC…GGMSEEDSES (482 aa)). The DEAA box motif lies at 913–916 (DEAA). The segment at 1260–1292 (EDTASGNSASRDAAAEVSTLEGGMSEEDSESDF) is disordered. Short sequence motifs (LXXLL motif) lie at residues 1306-1310 (LKELL), 1348-1352 (LWKFL), 1403-1407 (LVQIL), and 2240-2244 (LEGLP). Residue arginine 2381 is modified to Omega-N-methylarginine. Residues 2413–2947 (PEPCRGNWPR…RVQRKSALSS (535 aa)) are interaction with THRAP3. The UvrD-like helicase ATP-binding 2 domain maps to 2449–2726 (LNQSQDRAVR…IMLDTQYRMH (278 aa)). 2470 to 2477 (GPPGTGKT) is a binding site for ATP. The LXXLL motif 5 motif lies at 2525–2529 (LGGLL).

Belongs to the DNA2/NAM7 helicase family. In terms of assembly, interacts with PPARA (via DNA-binding domain) and PPARG; the interaction stimulates the transcriptional activity of PPARA and PPARG. Interacts with THRAP3; the interaction is direct and HELZ2 and THRAP3 synergistically enhance the transcriptional activity of PPARG. It is probably part of the peroxisome proliferator activated receptor alpha interacting complex (PRIC).

The protein resides in the cytoplasm. The enzyme catalyses Exonucleolytic cleavage in the 3'- to 5'-direction to yield nucleoside 5'-phosphates.. It catalyses the reaction ATP + H2O = ADP + phosphate + H(+). Its function is as follows. Can degrade highly structured RNAs through its concerted ATP-dependent RNA helicase and 3' to 5' exoribonuclease activities. Shows a strong preference for pyrimidine over purine residues for its nuclease activity. Acts as a transcriptional coactivator for a number of nuclear receptors including PPARA, PPARG, THRA, THRB and RXRA. The polypeptide is 3'-5' exoribonuclease HELZ2 (Helz2) (Mus musculus (Mouse)).